Reading from the N-terminus, the 252-residue chain is Imidazole glycerol phosphate synthase subunit HisF (252 aa).

Residues D11 and D130 contribute to the active site.

Belongs to the HisA/HisF family. In terms of assembly, heterodimer of HisH and HisF.

It localises to the cytoplasm. It carries out the reaction 5-[(5-phospho-1-deoxy-D-ribulos-1-ylimino)methylamino]-1-(5-phospho-beta-D-ribosyl)imidazole-4-carboxamide + L-glutamine = D-erythro-1-(imidazol-4-yl)glycerol 3-phosphate + 5-amino-1-(5-phospho-beta-D-ribosyl)imidazole-4-carboxamide + L-glutamate + H(+). It functions in the pathway amino-acid biosynthesis; L-histidine biosynthesis; L-histidine from 5-phospho-alpha-D-ribose 1-diphosphate: step 5/9. In terms of biological role, IGPS catalyzes the conversion of PRFAR and glutamine to IGP, AICAR and glutamate. The HisF subunit catalyzes the cyclization activity that produces IGP and AICAR from PRFAR using the ammonia provided by the HisH subunit. The protein is Imidazole glycerol phosphate synthase subunit HisF of Staphylococcus aureus (strain MRSA252).